A 112-amino-acid polypeptide reads, in one-letter code: T cell receptor alpha variable 7 (112 aa).

The N-terminal stretch at 1–21 (MEKMRRPVLIIFCLCLGWANG) is a signal peptide. An Ig-like domain is found at 22–112 (ENQVEHSPHF…DSATYFCAVD (91 aa)). Cys-44 and Cys-109 are disulfide-bonded. Residues Asn-84 and Asn-90 are each glycosylated (N-linked (GlcNAc...) asparagine).

Alpha-beta TR is a heterodimer composed of an alpha and beta chain; disulfide-linked. The alpha-beta TR is associated with the transmembrane signaling CD3 coreceptor proteins to form the TR-CD3 (TcR or TCR). The assembly of alpha-beta TR heterodimers with CD3 occurs in the endoplasmic reticulum where a single alpha-beta TR heterodimer associates with one CD3D-CD3E heterodimer, one CD3G-CD3E heterodimer and one CD247 homodimer forming a stable octameric structure. CD3D-CD3E and CD3G-CD3E heterodimers preferentially associate with TR alpha and TR beta chains, respectively. The association of the CD247 homodimer is the last step of TcR assembly in the endoplasmic reticulum and is required for transport to the cell surface.

The protein resides in the cell membrane. In terms of biological role, v region of the variable domain of T cell receptor (TR) alpha chain that participates in the antigen recognition. Alpha-beta T cell receptors are antigen specific receptors which are essential to the immune response and are present on the cell surface of T lymphocytes. Recognize peptide-major histocompatibility (MH) (pMH) complexes that are displayed by antigen presenting cells (APC), a prerequisite for efficient T cell adaptive immunity against pathogens. Binding of alpha-beta TR to pMH complex initiates TR-CD3 clustering on the cell surface and intracellular activation of LCK that phosphorylates the ITAM motifs of CD3G, CD3D, CD3E and CD247 enabling the recruitment of ZAP70. In turn ZAP70 phosphorylates LAT, which recruits numerous signaling molecules to form the LAT signalosome. The LAT signalosome propagates signal branching to three major signaling pathways, the calcium, the mitogen-activated protein kinase (MAPK) kinase and the nuclear factor NF-kappa-B (NF-kB) pathways, leading to the mobilization of transcription factors that are critical for gene expression and essential for T cell growth and differentiation. The T cell repertoire is generated in the thymus, by V-(D)-J rearrangement. This repertoire is then shaped by intrathymic selection events to generate a peripheral T cell pool of self-MH restricted, non-autoaggressive T cells. Post-thymic interaction of alpha-beta TR with the pMH complexes shapes TR structural and functional avidity. The sequence is that of T cell receptor alpha variable 7 from Homo sapiens (Human).